The chain runs to 555 residues: Urocanate hydratase (555 aa).

NAD(+) is bound by residues 51–52 (GG), Gln-129, 175–177 (GMG), Glu-195, 262–266 (QTSAH), 272–273 (YL), and Tyr-321. Cys-409 is an active-site residue. NAD(+) is bound at residue Gly-491.

It belongs to the urocanase family. The cofactor is NAD(+).

It is found in the cytoplasm. It carries out the reaction 4-imidazolone-5-propanoate = trans-urocanate + H2O. The protein operates within amino-acid degradation; L-histidine degradation into L-glutamate; N-formimidoyl-L-glutamate from L-histidine: step 2/3. Catalyzes the conversion of urocanate to 4-imidazolone-5-propionate. The chain is Urocanate hydratase from Stenotrophomonas maltophilia (strain R551-3).